Consider the following 356-residue polypeptide: GMP reductase (356 aa).

Residues 26 to 27, Lys-78, 132 to 134, and 183 to 184 each bind NADP(+); these read SR, DVA, and IG. K(+)-binding residues include Gly-184, Gly-186, and Cys-189. The active-site Thioimidate intermediate is the Cys-189. Thr-191 acts as the Proton donor/acceptor in catalysis. Arg-192 serves as a coordination point for K(+). GMP contacts are provided by residues 222–224, 245–246, 271–273, and 289–293; these read DGG, GG, GMS, and RASEG. NADP(+)-binding positions include Met-272, 288-289, and 317-320; these read YR and SACT.

Belongs to the IMPDH/GMPR family.

The catalysed reaction is IMP + NH4(+) + NADP(+) = GMP + NADPH + 2 H(+). Functionally, catalyzes the irreversible NADPH-dependent deamination of GMP to IMP. It functions in the conversion of nucleobase, nucleoside and nucleotide derivatives of G to A nucleotides, and in maintaining the intracellular balance of A and G nucleotides. This chain is GMP reductase, found in Ascaris suum (Pig roundworm).